We begin with the raw amino-acid sequence, 396 residues long: Putative T-box protein 39 (396 aa).

A DNA-binding region (T-box) is located at residues 11–192; sequence MAEEDRWKQW…KNSTYGNRLD (182 aa). Positions 185–215 are disordered; it reads STYGNRLDGGNKRKNTDSSEERTSKRSKNET. Residues 193–215 are compositionally biased toward basic and acidic residues; sequence GGNKRKNTDSSEERTSKRSKNET.

Its subcellular location is the nucleus. This Caenorhabditis elegans protein is Putative T-box protein 39 (tbx-39).